Here is a 109-residue protein sequence, read N- to C-terminus: Spermidine export protein MdtI (109 aa).

Helical transmembrane passes span 6–26, 36–56, 64–84, and 88–108; these read WVHAAWLALAIVLEIVANVFL, IFGLLSQAAVLAAFSALSQAV, AYALWGGFGIAATLAAGWILF, and LNRKGWIGLVLLLAGMIMVKL.

Belongs to the drug/metabolite transporter (DMT) superfamily. Small multidrug resistance (SMR) (TC 2.A.7.1) family. MdtI subfamily. Forms a complex with MdtJ.

Its subcellular location is the cell inner membrane. In terms of biological role, catalyzes the excretion of spermidine. The polypeptide is Spermidine export protein MdtI (Shigella dysenteriae serotype 1 (strain Sd197)).